The sequence spans 177 residues: ATP synthase subunit delta (177 aa).

It belongs to the ATPase delta chain family. F-type ATPases have 2 components, F(1) - the catalytic core - and F(0) - the membrane proton channel. F(1) has five subunits: alpha(3), beta(3), gamma(1), delta(1), epsilon(1). F(0) has three main subunits: a(1), b(2) and c(10-14). The alpha and beta chains form an alternating ring which encloses part of the gamma chain. F(1) is attached to F(0) by a central stalk formed by the gamma and epsilon chains, while a peripheral stalk is formed by the delta and b chains.

It localises to the cell inner membrane. Its function is as follows. F(1)F(0) ATP synthase produces ATP from ADP in the presence of a proton or sodium gradient. F-type ATPases consist of two structural domains, F(1) containing the extramembraneous catalytic core and F(0) containing the membrane proton channel, linked together by a central stalk and a peripheral stalk. During catalysis, ATP synthesis in the catalytic domain of F(1) is coupled via a rotary mechanism of the central stalk subunits to proton translocation. In terms of biological role, this protein is part of the stalk that links CF(0) to CF(1). It either transmits conformational changes from CF(0) to CF(1) or is implicated in proton conduction. The chain is ATP synthase subunit delta from Shewanella denitrificans (strain OS217 / ATCC BAA-1090 / DSM 15013).